The chain runs to 355 residues: MHKLRKIIHIDMDCFYAAVEMRENPALRDKPIAVGGSVQQRGVLTTCNYPARKFGLHSAMPTGQALKLCPDLILLPVNITLYKQVSHQIKQIFHRYTDNIEPLSLDEAYLDVTDCVQCSGSATWIAEEIRRAIFNELHLTASAGVAPLKFLAKIASDQNKPNGIFVITPGEVDNFVKTLPLSKIPGVGKVTGQKLLQMGLKTCGDVQKLDLTVLLNRFGKFGQRIWQYSHGIDEREVQSHWQRKSVGVEDTLLRNITDIEQGIVELERLYPILEQRIKRACPDIPFERFRKLGVKLKFEDFQVTTLEKSAVEFKRENFIVLLRQIWQRRQGRAIRLVGLQVTIPEQKAEQQMSLW.

The region spanning Ile7 to Gly188 is the UmuC domain. The Mg(2+) site is built by Asp11 and Asp106. The active site involves Glu107.

The protein belongs to the DNA polymerase type-Y family. As to quaternary structure, monomer. Mg(2+) is required as a cofactor.

Its subcellular location is the cytoplasm. The catalysed reaction is DNA(n) + a 2'-deoxyribonucleoside 5'-triphosphate = DNA(n+1) + diphosphate. Poorly processive, error-prone DNA polymerase involved in untargeted mutagenesis. Copies undamaged DNA at stalled replication forks, which arise in vivo from mismatched or misaligned primer ends. These misaligned primers can be extended by PolIV. Exhibits no 3'-5' exonuclease (proofreading) activity. May be involved in translesional synthesis, in conjunction with the beta clamp from PolIII. The chain is DNA polymerase IV from Mannheimia succiniciproducens (strain KCTC 0769BP / MBEL55E).